The following is a 316-amino-acid chain: tRNA(Ile)-lysidine synthase (316 aa).

33-38 (SGGTDS) provides a ligand contact to ATP.

Belongs to the tRNA(Ile)-lysidine synthase family.

It is found in the cytoplasm. The enzyme catalyses cytidine(34) in tRNA(Ile2) + L-lysine + ATP = lysidine(34) in tRNA(Ile2) + AMP + diphosphate + H(+). Its function is as follows. Ligates lysine onto the cytidine present at position 34 of the AUA codon-specific tRNA(Ile) that contains the anticodon CAU, in an ATP-dependent manner. Cytidine is converted to lysidine, thus changing the amino acid specificity of the tRNA from methionine to isoleucine. The polypeptide is tRNA(Ile)-lysidine synthase (Bdellovibrio bacteriovorus (strain ATCC 15356 / DSM 50701 / NCIMB 9529 / HD100)).